The sequence spans 166 residues: NAD(P)H-quinone oxidoreductase subunit I, chloroplastic (166 aa).

2 4Fe-4S ferredoxin-type domains span residues 55 to 84 (GRIHFEFDKCIACEVCVRVCPIDLPVVDWK) and 95 to 124 (LNYSIDFGICIFCGNCVEYCPTNCLSMTEE). [4Fe-4S] cluster contacts are provided by cysteine 64, cysteine 67, cysteine 70, cysteine 74, cysteine 104, cysteine 107, cysteine 110, and cysteine 114.

Belongs to the complex I 23 kDa subunit family. As to quaternary structure, NDH is composed of at least 16 different subunits, 5 of which are encoded in the nucleus. [4Fe-4S] cluster serves as cofactor.

The protein resides in the plastid. Its subcellular location is the chloroplast thylakoid membrane. It carries out the reaction a plastoquinone + NADH + (n+1) H(+)(in) = a plastoquinol + NAD(+) + n H(+)(out). The enzyme catalyses a plastoquinone + NADPH + (n+1) H(+)(in) = a plastoquinol + NADP(+) + n H(+)(out). Functionally, NDH shuttles electrons from NAD(P)H:plastoquinone, via FMN and iron-sulfur (Fe-S) centers, to quinones in the photosynthetic chain and possibly in a chloroplast respiratory chain. The immediate electron acceptor for the enzyme in this species is believed to be plastoquinone. Couples the redox reaction to proton translocation, and thus conserves the redox energy in a proton gradient. This is NAD(P)H-quinone oxidoreductase subunit I, chloroplastic from Aphanactis jamesoniana.